A 236-amino-acid chain; its full sequence is Purine nucleoside phosphorylase DeoD-type (236 aa).

Position 5 (histidine 5) interacts with a purine D-ribonucleoside. Phosphate contacts are provided by residues glycine 21, arginine 25, arginine 44, and 88–91 (RVGT). A purine D-ribonucleoside is bound by residues 180–182 (EME) and 204–205 (SD). Catalysis depends on aspartate 205, which acts as the Proton donor.

Belongs to the PNP/UDP phosphorylase family. In terms of assembly, homohexamer; trimer of homodimers.

The catalysed reaction is a purine D-ribonucleoside + phosphate = a purine nucleobase + alpha-D-ribose 1-phosphate. The enzyme catalyses a purine 2'-deoxy-D-ribonucleoside + phosphate = a purine nucleobase + 2-deoxy-alpha-D-ribose 1-phosphate. In terms of biological role, catalyzes the reversible phosphorolytic breakdown of the N-glycosidic bond in the beta-(deoxy)ribonucleoside molecules, with the formation of the corresponding free purine bases and pentose-1-phosphate. This chain is Purine nucleoside phosphorylase DeoD-type, found in Shewanella frigidimarina (strain NCIMB 400).